The primary structure comprises 329 residues: CDP-6-deoxy-L-threo-D-glycero-4-hexulose-3-dehydrase reductase (329 aa).

The 2Fe-2S ferredoxin-type domain occupies 2–93 (SLNVKLHPSG…ELDVNYYPEL (92 aa)). Positions 37, 42, 45, and 75 each coordinate [2Fe-2S] cluster. The FAD-binding FR-type domain maps to 98-197 (KKTYPCKLDS…EGPQGTFFVR (100 aa)).

In terms of assembly, monomer.

The protein operates within nucleotide-sugar biosynthesis; CDP-ascarylose biosynthesis. Its pathway is bacterial outer membrane biogenesis; lipopolysaccharide biosynthesis. Participates in the conversion of CDP-6-deoxy-D-glycero-L-threo-4-hexulose to 3,6-dideoxy-D-glycero-D-glycero-4-hexulose together with CDP-6-deoxy-D-glycero-L-threo-4-hexulose-3-dehydrase (E1) in two consecutive steps. The detailed mechanism of E3 is not yet resolved. In Yersinia pestis, this protein is CDP-6-deoxy-L-threo-D-glycero-4-hexulose-3-dehydrase reductase (ascD).